We begin with the raw amino-acid sequence, 86 residues long: UPF0297 protein STH1998 (86 aa).

This sequence belongs to the UPF0297 family.

The polypeptide is UPF0297 protein STH1998 (Symbiobacterium thermophilum (strain DSM 24528 / JCM 14929 / IAM 14863 / T)).